The sequence spans 702 residues: Ribosomal RNA large subunit methyltransferase K/L (702 aa).

In terms of domain architecture, THUMP spans leucine 43–leucine 154.

This sequence belongs to the methyltransferase superfamily. RlmKL family.

It is found in the cytoplasm. The enzyme catalyses guanosine(2445) in 23S rRNA + S-adenosyl-L-methionine = N(2)-methylguanosine(2445) in 23S rRNA + S-adenosyl-L-homocysteine + H(+). It catalyses the reaction guanosine(2069) in 23S rRNA + S-adenosyl-L-methionine = N(2)-methylguanosine(2069) in 23S rRNA + S-adenosyl-L-homocysteine + H(+). In terms of biological role, specifically methylates the guanine in position 2445 (m2G2445) and the guanine in position 2069 (m7G2069) of 23S rRNA. This chain is Ribosomal RNA large subunit methyltransferase K/L, found in Salmonella schwarzengrund (strain CVM19633).